The chain runs to 425 residues: MLNIKWIRENQELFDEKLSQRFIEPMSSKIAMLDGEKRKITCLIQEFQHARKVKSKILGNMASKSGEEFEGLQRDVKHINEKLEELEQDLNNNNELNELLNMLPNIPDEEVPYGMDESMNKLVRTYGETNPNALNKQHFELGTKLNLMDFEQTAKISGARFVTLKGDLAKLERALINFMIDVHTKEFDFFEISPPVLVRDNAMYNAGQLPKFAEESFATTNGYRLIPTAEVSLVNIVADTIIPREKLPMRYVAYTPCFRSEAGSSGRDTRGMIRLHQFGKVELVSITTTEESKNEHEYITNASETILQKLNLPYRVMLLCTGDMGFAAKKTYDIEVWLPGQKQYREIASCSNCGDFQARRMKARYKEFGSNETTLVHTLNASGLPIGRTMVAILENYQNEDGSITIPDVLINYMGGLQKITTYSE.

228–230 is a binding site for L-serine; sequence TAE. 259 to 261 is a binding site for ATP; it reads RSE. Residue Glu282 coordinates L-serine. 346 to 349 contacts ATP; it reads EIAS. L-serine is bound at residue Ser382.

It belongs to the class-II aminoacyl-tRNA synthetase family. Type-1 seryl-tRNA synthetase subfamily. Homodimer. The tRNA molecule binds across the dimer.

It localises to the cytoplasm. It carries out the reaction tRNA(Ser) + L-serine + ATP = L-seryl-tRNA(Ser) + AMP + diphosphate + H(+). The catalysed reaction is tRNA(Sec) + L-serine + ATP = L-seryl-tRNA(Sec) + AMP + diphosphate + H(+). It participates in aminoacyl-tRNA biosynthesis; selenocysteinyl-tRNA(Sec) biosynthesis; L-seryl-tRNA(Sec) from L-serine and tRNA(Sec): step 1/1. Functionally, catalyzes the attachment of serine to tRNA(Ser). Is also able to aminoacylate tRNA(Sec) with serine, to form the misacylated tRNA L-seryl-tRNA(Sec), which will be further converted into selenocysteinyl-tRNA(Sec). This is Serine--tRNA ligase from Rickettsia felis (strain ATCC VR-1525 / URRWXCal2) (Rickettsia azadi).